A 130-amino-acid polypeptide reads, in one-letter code: Large ribosomal subunit protein bL12 (130 aa).

This sequence belongs to the bacterial ribosomal protein bL12 family. As to quaternary structure, homodimer. Part of the ribosomal stalk of the 50S ribosomal subunit. Forms a multimeric L10(L12)X complex, where L10 forms an elongated spine to which 2 to 4 L12 dimers bind in a sequential fashion. Binds GTP-bound translation factors.

Forms part of the ribosomal stalk which helps the ribosome interact with GTP-bound translation factors. Is thus essential for accurate translation. In Chlamydia trachomatis serovar L2 (strain ATCC VR-902B / DSM 19102 / 434/Bu), this protein is Large ribosomal subunit protein bL12.